The following is a 218-amino-acid chain: Small ribosomal subunit protein uS3c (218 aa).

A KH type-2 domain is found at 47 to 118 (VRRHMKNYSN…KLNISIAKVA (72 aa)).

Belongs to the universal ribosomal protein uS3 family. Part of the 30S ribosomal subunit.

The protein resides in the plastid. It localises to the chloroplast. The protein is Small ribosomal subunit protein uS3c (rps3) of Ginkgo biloba (Ginkgo).